A 379-amino-acid polypeptide reads, in one-letter code: Probable protein phosphatase 2C 46 (379 aa).

A signal peptide spans 1–20 (MLSTLMKLLSACLWPSSSSG). The PPM-type phosphatase domain maps to 42-353 (LVGEFSMAVV…DDITVVIIFL (312 aa)). Phosphoserine is present on S73. Mn(2+) contacts are provided by D84, G85, D285, and D344.

The protein belongs to the PP2C family. Interacts with SAUR19. Mg(2+) is required as a cofactor. The cofactor is Mn(2+).

The catalysed reaction is O-phospho-L-seryl-[protein] + H2O = L-seryl-[protein] + phosphate. The enzyme catalyses O-phospho-L-threonyl-[protein] + H2O = L-threonyl-[protein] + phosphate. In terms of biological role, may dephosphorylate and repress plasma membrane H(+)-ATPases (PM H(+)-ATPases, e.g. AHA1 and AHA2), thus influencing negatively plant growth and fitness. The polypeptide is Probable protein phosphatase 2C 46 (Arabidopsis thaliana (Mouse-ear cress)).